Here is an 853-residue protein sequence, read N- to C-terminus: Putative dipeptidyl aminopeptidase C14C4.15c (853 aa).

The disordered stretch occupies residues Met-1–Ala-26. Over Met-1 to Arg-65 the chain is Cytoplasmic. Positions Ser-15–Ser-25 are enriched in basic residues. The helical; Signal-anchor for type II membrane protein transmembrane segment at Tyr-66–Phe-86 threads the bilayer. The Lumenal portion of the chain corresponds to Arg-87–Cys-853. Asn-96, Asn-102, Asn-472, Asn-483, and Asn-613 each carry an N-linked (GlcNAc...) asparagine glycan. Catalysis depends on charge relay system residues Ser-719, Asp-795, and His-828.

Belongs to the peptidase S9B family.

The protein localises to the vacuole membrane. The sequence is that of Putative dipeptidyl aminopeptidase C14C4.15c from Schizosaccharomyces pombe (strain 972 / ATCC 24843) (Fission yeast).